A 207-amino-acid chain; its full sequence is MAMAMEISLPFVGSSMALSAGKSRNSVSRISRVGFSSVSAVHVPRRMFMQLSGFGSVLTLLDFPSLAAPVPQMKEPEVIRTLKLPSGVRYQEIIEGEGREAHEGDLVELNYVCRRANGYFVHSTVDQFSGESSPVKLILDENDVIEGLKEVLVGMKAGGKRRALIPPSVGYINETLKPIPEEFGPRRSLLSHANEPLVFEIQLLKVL.

In terms of domain architecture, PPIase FKBP-type spans 104–207 (GDLVELNYVC…VFEIQLLKVL (104 aa)).

This sequence belongs to the FKBP-type PPIase family.

Its subcellular location is the plastid. The protein localises to the chloroplast thylakoid lumen. It carries out the reaction [protein]-peptidylproline (omega=180) = [protein]-peptidylproline (omega=0). Its function is as follows. PPIases accelerate the folding of proteins. It catalyzes the cis-trans isomerization of proline imidic peptide bonds in oligopeptides. This Arabidopsis thaliana (Mouse-ear cress) protein is Peptidyl-prolyl cis-trans isomerase FKBP16-1, chloroplastic (FKBP16-1).